Consider the following 251-residue polypeptide: Triosephosphate isomerase (251 aa).

9–11 contacts substrate; the sequence is NWK. His95 (electrophile) is an active-site residue. Catalysis depends on Glu167, which acts as the Proton acceptor. Substrate-binding positions include Gly173, Ser212, and 233-234; that span reads GG.

This sequence belongs to the triosephosphate isomerase family. As to quaternary structure, homodimer.

The protein resides in the cytoplasm. It carries out the reaction D-glyceraldehyde 3-phosphate = dihydroxyacetone phosphate. Its pathway is carbohydrate biosynthesis; gluconeogenesis. It functions in the pathway carbohydrate degradation; glycolysis; D-glyceraldehyde 3-phosphate from glycerone phosphate: step 1/1. In terms of biological role, involved in the gluconeogenesis. Catalyzes stereospecifically the conversion of dihydroxyacetone phosphate (DHAP) to D-glyceraldehyde-3-phosphate (G3P). This is Triosephosphate isomerase from Pseudomonas paraeruginosa (strain DSM 24068 / PA7) (Pseudomonas aeruginosa (strain PA7)).